The sequence spans 213 residues: Heavy metal-binding protein HIP (213 aa).

A C1q domain is found at 80–213 (FKSHHVAFSA…MSTFTGFMLH (134 aa)).

As to expression, pallium, gill and liver.

The protein localises to the secreted. Binds heavy metals. May function as a carrier of divalent cations in plasma. The chain is Heavy metal-binding protein HIP from Mytilus edulis (Blue mussel).